The following is a 189-amino-acid chain: MSNFLLVIPEDVIKGCSKADKLVVTGEFDNWRHSDYVLQYDGSTQNYRVQIPRRKGQRSTMFKVVINDKKWVTLNYFDTVTDKSGYTNNILHFKDNEASQLMDIPLSPHTRSNTAKGKPEDDSLNDYVNLSSHSDLSSTEEIVCWNSDMEDENMDATIQCDFHQAFNSRKESLNGLMCIAKKVKTYWNK.

Positions 1–96 (MSNFLLVIPE…TNNILHFKDN (96 aa)) are binds glycogen. A required for sequestration into autophagosomes region spans residues 97–189 (EASQLMDIPL…AKKVKTYWNK (93 aa)). The residue at position 107 (S107) is a Phosphoserine. The short motif at 127-130 (YVNL) is the ATG8 interaction motif (AIM) element. Position 172 is a phosphoserine (S172). The tract at residues 176–187 (LMCIAKKVKTYW) is may facilitate interactions with the autophagosome membrane.

As to quaternary structure, interacts with ATG8.

It is found in the cytoplasm. The protein localises to the cytosol. It localises to the cytoplasmic vesicle. Its subcellular location is the autophagosome. Autophagy receptor for glycogen that facilitates the sequestration of glycogen assemblies into autophagosomes as part of bulk autophagy; the autophagy of glycogen (glycophagy) is stimulated during prolonged nitrogen starvation and during sporulation. In Saccharomyces cerevisiae (strain ATCC 204508 / S288c) (Baker's yeast), this protein is Autophagy receptor ATG45.